The chain runs to 129 residues: D-ribose pyranase (129 aa).

Residue His-20 is the Proton donor of the active site. Substrate contacts are provided by residues Asp-28, His-96, and 118–120; that span reads YAN.

It belongs to the RbsD / FucU family. RbsD subfamily. In terms of assembly, homodecamer.

It localises to the cytoplasm. It catalyses the reaction beta-D-ribopyranose = beta-D-ribofuranose. It participates in carbohydrate metabolism; D-ribose degradation; D-ribose 5-phosphate from beta-D-ribopyranose: step 1/2. Catalyzes the interconversion of beta-pyran and beta-furan forms of D-ribose. The chain is D-ribose pyranase from Shouchella clausii (strain KSM-K16) (Alkalihalobacillus clausii).